The primary structure comprises 800 residues: DNA topoisomerase 4 subunit A (800 aa).

The Topo IIA-type catalytic domain occupies 31–495 (LPDVRDGLKP…EIEEIKIDKE (465 aa)). Residue Tyr119 is the O-(5'-phospho-DNA)-tyrosine intermediate of the active site.

This sequence belongs to the type II topoisomerase GyrA/ParC subunit family. ParC type 2 subfamily. Heterotetramer composed of ParC and ParE.

Its subcellular location is the cell membrane. The catalysed reaction is ATP-dependent breakage, passage and rejoining of double-stranded DNA.. In terms of biological role, topoisomerase IV is essential for chromosome segregation. It relaxes supercoiled DNA. Performs the decatenation events required during the replication of a circular DNA molecule. This chain is DNA topoisomerase 4 subunit A, found in Staphylococcus aureus (strain MW2).